A 116-amino-acid polypeptide reads, in one-letter code: Putative antiporter subunit mnhC2 (116 aa).

A run of 3 helical transmembrane segments spans residues 3–23, 28–48, and 72–92; these read LILLLVIGFLVFIGTYMILSL, IVIGISIYTHAGNLIIMSMGH, and AIVLTAIVIGFAMTAFLLVLV.

The protein belongs to the CPA3 antiporters (TC 2.A.63) subunit C family. May form a heterooligomeric complex that consists of seven subunits: mnhA2, mnhB2, mnhC2, mnhD2, mnhE2, mnhF2 and mnhG2.

Its subcellular location is the cell membrane. The chain is Putative antiporter subunit mnhC2 (mnhC2) from Staphylococcus haemolyticus (strain JCSC1435).